The primary structure comprises 351 residues: Xaa-Pro dipeptidase (351 aa).

Residues aspartate 212, aspartate 223, histidine 287, glutamate 316, and glutamate 330 each contribute to the Co(2+) site.

The protein belongs to the peptidase M24B family. Archaeal-type prolidase subfamily. In terms of assembly, homodimer. The cofactor is Co(2+).

It is found in the cytoplasm. It carries out the reaction Xaa-L-Pro dipeptide + H2O = an L-alpha-amino acid + L-proline. Splits dipeptides with a prolyl in the C-terminal position and a nonpolar amino acid at the N-terminal position. This is Xaa-Pro dipeptidase (pepQ) from Pyrococcus horikoshii (strain ATCC 700860 / DSM 12428 / JCM 9974 / NBRC 100139 / OT-3).